Here is a 519-residue protein sequence, read N- to C-terminus: Cysteine--tRNA ligase (519 aa).

Cys-30 is a binding site for Zn(2+). Residues Pro-32 to Asn-42 carry the 'HIGH' region motif. Zn(2+)-binding residues include Cys-221, His-253, and Glu-257. The 'KMSKS' region signature appears at Lys-286–Ser-290. Lys-289 contributes to the ATP binding site.

Belongs to the class-I aminoacyl-tRNA synthetase family. In terms of assembly, monomer. The cofactor is Zn(2+).

The protein resides in the cytoplasm. The catalysed reaction is tRNA(Cys) + L-cysteine + ATP = L-cysteinyl-tRNA(Cys) + AMP + diphosphate. The chain is Cysteine--tRNA ligase from Cereibacter sphaeroides (strain KD131 / KCTC 12085) (Rhodobacter sphaeroides).